The sequence spans 349 residues: MIEFDNLTYLHGKPQGTGLLKANPEDFVVVEDLGFEPDGEGEHILVRILKNGCNTRFVADALAKFLKIHAREVSFAGQKDKHAVTEQWFCARVPGKEMPDLSAFQLEGCQVLEYARHKRKLRLGALKGNAFTLVLRDVSNRDDVEQRLIDICVKGVPNYFGAQRFGIGGSNLQGALRWAQTNTPVRDRNKRSFWLSAARSALFNQIVAERLKKADVNQVVDGDALQLAGRGSWFVATTEELAELQRRVNDKELMITAALPGSGEWGTQREALAFEQAAVAEETELQTLLVREKVEAARRAMLLYPQQLSWNWWDDVTVEIRFWLPAGSFATSVVRELINTTGEYAHIAE.

Substrate is bound at residue F27. The Nucleophile role is filled by D80. N129 provides a ligand contact to substrate. Residues 155 to 303 (GVPNYFGAQR…VEAARRAMLL (149 aa)) enclose the TRUD domain. F329 lines the substrate pocket.

The protein belongs to the pseudouridine synthase TruD family.

The enzyme catalyses uridine(13) in tRNA = pseudouridine(13) in tRNA. Its function is as follows. Responsible for synthesis of pseudouridine from uracil-13 in transfer RNAs. The protein is tRNA pseudouridine synthase D of Escherichia fergusonii (strain ATCC 35469 / DSM 13698 / CCUG 18766 / IAM 14443 / JCM 21226 / LMG 7866 / NBRC 102419 / NCTC 12128 / CDC 0568-73).